A 367-amino-acid chain; its full sequence is Germination protease (367 aa).

Residues 1–15 (MKEPLDLSKYSVRTD) constitute a propeptide that is removed on maturation.

The protein belongs to the peptidase A25 family. Homotetramer. Post-translationally, autoproteolytically processed. The inactive tetrameric zymogen termed p46 autoprocesses to a smaller form termed p41, which is active only during spore germination.

The catalysed reaction is Endopeptidase action with P4 Glu or Asp, P1 preferably Glu &gt; Asp, P1' hydrophobic and P2' Ala.. In terms of biological role, initiates the rapid degradation of small, acid-soluble proteins during spore germination. The polypeptide is Germination protease (Bacillus thuringiensis subsp. konkukian (strain 97-27)).